The chain runs to 826 residues: Golgin subfamily A member 6-like protein 25 (826 aa).

6 disordered regions span residues 1–100 (MWPQ…HQEA), 297–327 (QEQEEKIREQEEKMRRQEEMMWEKEEKMRRQ), 345–425 (MHEQ…EMWR), 502–534 (QEEMWREEEKMHEQEKIWEEEKRQEQEDKMWRQ), 547–646 (RQEE…EQEE), and 658–826 (QEEM…MQEH). Over residues 31–52 (MSKETRQSKLAEAKEQLTDHHP) the composition is skewed to basic and acidic residues. 2 stretches are compositionally biased toward polar residues: residues 53 to 63 (QTNPSVGTAAS) and 71 to 83 (NNGTNPETTTSGG). Residues 86–100 (SPEDEQKASHQHQEA) are compositionally biased toward basic and acidic residues. The stretch at 157–822 (LEQALSAVAT…EVRLRQQEEK (666 aa)) forms a coiled coil. Composition is skewed to basic and acidic residues over residues 658–678 (QEEMMQEQEEKMGEQEEKMWE) and 686–826 (QEEK…MQEH).

This sequence belongs to the GOLGA6 family.

The chain is Golgin subfamily A member 6-like protein 25 from Homo sapiens (Human).